Reading from the N-terminus, the 274-residue chain is 2-dehydro-3-deoxyphosphooctonate aldolase (274 aa).

The protein belongs to the KdsA family.

The protein localises to the cytoplasm. It carries out the reaction D-arabinose 5-phosphate + phosphoenolpyruvate + H2O = 3-deoxy-alpha-D-manno-2-octulosonate-8-phosphate + phosphate. It functions in the pathway carbohydrate biosynthesis; 3-deoxy-D-manno-octulosonate biosynthesis; 3-deoxy-D-manno-octulosonate from D-ribulose 5-phosphate: step 2/3. Its pathway is bacterial outer membrane biogenesis; lipopolysaccharide biosynthesis. The chain is 2-dehydro-3-deoxyphosphooctonate aldolase from Rickettsia conorii (strain ATCC VR-613 / Malish 7).